Consider the following 160-residue polypeptide: Transcriptional regulator MraZ (160 aa).

2 SpoVT-AbrB domains span residues 5–50 (KFDT…GDQV) and 93–136 (AVEC…SQAV).

Belongs to the MraZ family. As to quaternary structure, forms oligomers.

The protein localises to the cytoplasm. It is found in the nucleoid. In Geobacter sp. (strain M21), this protein is Transcriptional regulator MraZ.